The following is a 73-amino-acid chain: Putative neurotoxin NaH-Cpp1a (73 aa).

The N-terminal stretch at 1–23 (MKSFYGILCVAVLMMFHLEMSES) is a signal peptide. 3 cysteine pairs are disulfide-bonded: Cys43-Cys58, Cys50-Cys63, and Cys57-Cys70.

As to expression, expressed outside of acontia.

Its subcellular location is the secreted. It localises to the nematocyst. Putative neurotoxin. This chain is Putative neurotoxin NaH-Cpp1a, found in Calliactis polypus (Hermit crab anemone).